An 817-amino-acid chain; its full sequence is Protein hunchback (817 aa).

3 disordered regions span residues 51–77 (PGTI…HSPL), 93–132 (HNGG…TSSA), and 187–252 (YSQQ…EDQD). Residues 62 to 76 (QQHSSMMASQPQHSP) show a composition bias toward low complexity. The span at 103–119 (FSDNSGAMTPSPNTNVG) shows a compositional bias: polar residues. The span at 189-201 (QQQQQQQQRQLQQ) shows a compositional bias: low complexity. 4 consecutive C2H2-type zinc fingers follow at residues 287–309 (HKCK…ARTH), 316–338 (LQCP…IRKH), 344–366 (FQCD…RKSH), and 372–396 (YRCA…KYEH). Disordered stretches follow at residues 456 to 477 (PLQQ…SSVA), 491 to 513 (QNLA…SSQQ), 564 to 619 (QLQQ…QQTP), and 666 to 758 (APTS…AGNS). Residues 564-576 (QLQQQQQNKQANE) show a composition bias toward low complexity. The span at 577-595 (NGEEDEEDNDEVDEDEEEF) shows a compositional bias: acidic residues. Residues 680 to 694 (MPPTTSSPIHPSQVN) are compositionally biased toward polar residues. The span at 721 to 758 (PTTANTSASSTASSSGNSSNSSSTSTSSNSNSSSAGNS) shows a compositional bias: low complexity. 2 consecutive C2H2-type zinc fingers follow at residues 764–786 (YECK…MGYH) and 792–816 (FKCN…RNAH).

Belongs to the hunchback C2H2-type zinc-finger protein family.

The protein resides in the nucleus. Gap class segmentation protein that controls development of head structures. The polypeptide is Protein hunchback (hb) (Musca domestica (House fly)).